The sequence spans 179 residues: Large ribosomal subunit protein uL5 (179 aa).

Belongs to the universal ribosomal protein uL5 family. Part of the 50S ribosomal subunit; part of the 5S rRNA/L5/L18/L25 subcomplex. Contacts the 5S rRNA and the P site tRNA. Forms a bridge to the 30S subunit in the 70S ribosome.

Its function is as follows. This is one of the proteins that bind and probably mediate the attachment of the 5S RNA into the large ribosomal subunit, where it forms part of the central protuberance. In the 70S ribosome it contacts protein S13 of the 30S subunit (bridge B1b), connecting the 2 subunits; this bridge is implicated in subunit movement. Contacts the P site tRNA; the 5S rRNA and some of its associated proteins might help stabilize positioning of ribosome-bound tRNAs. This Sodalis glossinidius (strain morsitans) protein is Large ribosomal subunit protein uL5.